Here is a 357-residue protein sequence, read N- to C-terminus: DNA primase small subunit PriS (357 aa).

Residues Asp105, Asp107, and Asp259 contribute to the active site.

The protein belongs to the eukaryotic-type primase small subunit family. As to quaternary structure, heterodimer of a small subunit (PriS) and a large subunit (PriL). It depends on Mg(2+) as a cofactor. Mn(2+) is required as a cofactor.

Its function is as follows. Catalytic subunit of DNA primase, an RNA polymerase that catalyzes the synthesis of short RNA molecules used as primers for DNA polymerase during DNA replication. The small subunit contains the primase catalytic core and has DNA synthesis activity on its own. Binding to the large subunit stabilizes and modulates the activity, increasing the rate of DNA synthesis while decreasing the length of the DNA fragments, and conferring RNA synthesis capability. The DNA polymerase activity may enable DNA primase to also catalyze primer extension after primer synthesis. May also play a role in DNA repair. In Methanococcus maripaludis (strain C6 / ATCC BAA-1332), this protein is DNA primase small subunit PriS.